The chain runs to 527 residues: TnpB-like protein R854 (527 aa).

Positions 21 to 36 (GSKTKKKVFVKKKPPA) are enriched in basic residues. The segment at 21–50 (GSKTKKKVFVKKKPPAKKPPDKKPLKKTTK) is disordered. The Zn(2+) site is built by Cys481, Cys484, Cys498, and Cys501.

The protein in the central section; belongs to the transposase 2 family. In the C-terminal section; belongs to the transposase 35 family.

This is TnpB-like protein R854 from Acanthamoeba polyphaga mimivirus (APMV).